Reading from the N-terminus, the 555-residue chain is Sulfite reductase [NADPH] hemoprotein beta-component (555 aa).

[4Fe-4S] cluster-binding residues include C430, C436, C475, and C479. Residue C479 participates in siroheme binding.

The protein belongs to the nitrite and sulfite reductase 4Fe-4S domain family. As to quaternary structure, alpha(8)-beta(8). The alpha component is a flavoprotein, the beta component is a hemoprotein. The cofactor is siroheme. Requires [4Fe-4S] cluster as cofactor.

It catalyses the reaction hydrogen sulfide + 3 NADP(+) + 3 H2O = sulfite + 3 NADPH + 4 H(+). It functions in the pathway sulfur metabolism; hydrogen sulfide biosynthesis; hydrogen sulfide from sulfite (NADPH route): step 1/1. Its function is as follows. Component of the sulfite reductase complex that catalyzes the 6-electron reduction of sulfite to sulfide. This is one of several activities required for the biosynthesis of L-cysteine from sulfate. The polypeptide is Sulfite reductase [NADPH] hemoprotein beta-component (Leptospira biflexa serovar Patoc (strain Patoc 1 / Ames)).